The chain runs to 308 residues: MVWLWLGVGLLGGTGLASLVLAISLFTQRRGRKRSDETSSRGRLPGAASDKRGACACCYRIPKEDVVEPLDLELGLMRVATHPPTPQVPRCTSLYIGEDGLPIDKPEFPPARFEIPDVSTPGTPTSIGRSPSHCSSSSSLSSSASVDTVLHQPPPSWKPPPPPGRKKRPPTPPVRAPTTRLSSHRPPTPIPAPRKNLSTPPTKKTPPPTKPKPVGWTPPVTPRPFPKTPTPQKPPRNPRLPRTVGLENLSKVGLSCPCPRPRTPTEPTTLPIVSVSELAPPPRWSDIEELLEKAVQSVMKDAESMQMT.

The first 22 residues, 1-22 (MVWLWLGVGLLGGTGLASLVLA), serve as a signal peptide directing secretion. Residues 105 to 274 (KPEFPPARFE…TEPTTLPIVS (170 aa)) are disordered. The segment covering 126 to 145 (SIGRSPSHCSSSSSLSSSAS) has biased composition (low complexity). 2 stretches are compositionally biased toward pro residues: residues 152-163 (QPPPSWKPPPPP) and 219-238 (PVTP…PRNP).

Belongs to the HCMV UL135 family. Interacts with host components of the WAVE2 complex ABI1, NAP1 and WAVE2. Also interacts with host ABI2 and TLN1.

The protein localises to the host cell membrane. It is found in the host Golgi apparatus. In terms of biological role, remodels the host actin cytoskeleton in order to impair immune recognition of infected cells. Mechanistically, interacts with members of the host WAVE2 complex and redirects the complex to the plasma membrane. In turn, the efficiency of immune synapse formation is greatly reduced. This Human cytomegalovirus (strain Merlin) (HHV-5) protein is Protein UL135 (UL135).